Here is a 382-residue protein sequence, read N- to C-terminus: Pentatricopeptide repeat-containing protein 2, mitochondrial (382 aa).

The stretch at 159-193 (TSFNILMDMLFTKGQYERAVEVLVEMRNQRVRFSK) is one PPR repeat.

Belongs to the PTCD2 family.

Its subcellular location is the mitochondrion. In terms of biological role, may be involved in mitochondrial RNA maturation and mitochondrial respiratory chain function. The protein is Pentatricopeptide repeat-containing protein 2, mitochondrial (ptcd2) of Xenopus laevis (African clawed frog).